The chain runs to 877 residues: Phosphoenolpyruvate carboxylase (877 aa).

Active-site residues include His138 and Lys544.

It belongs to the PEPCase type 1 family. Requires Mg(2+) as cofactor.

It carries out the reaction oxaloacetate + phosphate = phosphoenolpyruvate + hydrogencarbonate. Forms oxaloacetate, a four-carbon dicarboxylic acid source for the tricarboxylic acid cycle. This chain is Phosphoenolpyruvate carboxylase, found in Vibrio vulnificus (strain CMCP6).